Consider the following 306-residue polypeptide: Protein SULFUR DEFICIENCY-INDUCED 1 (306 aa).

5 TPR repeats span residues 1–22 (MERS…NLMK), 71–104 (DSAL…CSKN), 107–140 (DSLD…IYQG), 167–200 (SRLL…EPDA), and 202–233 (KSCN…RVLG). Residues 72-139 (SALKDMAVVM…LKRKLRQIYQ (68 aa)) are a coiled coil. The stretch at 238–260 (RTRQRAEELLSELESSLPRMRDA) forms a coiled coil. The stretch at 270–304 (LDDDFVLGLEEMTSTSFKSKRLPIFEQISSFRNTL) is one TPR 6 repeat.

Belongs to the MS5 protein family.

The protein localises to the nucleus. In terms of biological role, involved in the utilization of stored sulfate under sulfur-deficient conditions. The sequence is that of Protein SULFUR DEFICIENCY-INDUCED 1 from Arabidopsis thaliana (Mouse-ear cress).